Consider the following 142-residue polypeptide: Hemoglobin subunit alpha (142 aa).

An N-acetylserine modification is found at Ser-1. Residues Ser-1–Arg-142 enclose the Globin domain. An O2-binding site is contributed by His-59. His-88 lines the heme b pocket.

Belongs to the globin family. As to quaternary structure, hb1 is a heterotetramer of two alpha chains and two beta-1 chains, while Hb2 is a heterotetramer of two alpha chains and two beta-2 chains. Red blood cells.

In terms of biological role, involved in oxygen transport from gills to the various peripheral tissues. The chain is Hemoglobin subunit alpha (hba) from Cygnodraco mawsoni (Antarctic dragonfish).